The chain runs to 711 residues: Polyribonucleotide nucleotidyltransferase (711 aa).

Mg(2+) contacts are provided by Asp486 and Asp492. The KH domain maps to 553-612; sequence PRIHTIKISTDKIKDVIGKGGSVIRALTEETGTTIEIEDDGTVKIAATDGEKAKYAIRRI. The region spanning 622–690 is the S1 motif domain; it reads GRIYNGKVTR…RQGRVRLSIK (69 aa). The interval 689-711 is disordered; that stretch reads IKEATEQTQPAAAPEAPTSEQGE. A compositionally biased stretch (low complexity) spans 694–711; that stretch reads EQTQPAAAPEAPTSEQGE.

The protein belongs to the polyribonucleotide nucleotidyltransferase family. As to quaternary structure, component of the RNA degradosome, which is a multiprotein complex involved in RNA processing and mRNA degradation. It depends on Mg(2+) as a cofactor.

It is found in the cytoplasm. The catalysed reaction is RNA(n+1) + phosphate = RNA(n) + a ribonucleoside 5'-diphosphate. In terms of biological role, involved in mRNA degradation. Catalyzes the phosphorolysis of single-stranded polyribonucleotides processively in the 3'- to 5'-direction. This chain is Polyribonucleotide nucleotidyltransferase, found in Salmonella arizonae (strain ATCC BAA-731 / CDC346-86 / RSK2980).